A 376-amino-acid chain; its full sequence is DNA-directed RNA polymerase subunit alpha (376 aa).

The interval 1–259 (MSDCSQNLLY…KHFSIFEKMD (259 aa)) is alpha N-terminal domain (alpha-NTD). The interval 276 to 376 (KDDILHKLVL…DKIRSKNGKG (101 aa)) is alpha C-terminal domain (alpha-CTD).

Belongs to the RNA polymerase alpha chain family. Homodimer. The RNAP catalytic core consists of 2 alpha, 1 beta, 1 beta' and 1 omega subunit. When a sigma factor is associated with the core the holoenzyme is formed, which can initiate transcription.

It catalyses the reaction RNA(n) + a ribonucleoside 5'-triphosphate = RNA(n+1) + diphosphate. DNA-dependent RNA polymerase catalyzes the transcription of DNA into RNA using the four ribonucleoside triphosphates as substrates. The protein is DNA-directed RNA polymerase subunit alpha of Chlamydia abortus (strain DSM 27085 / S26/3) (Chlamydophila abortus).